The primary structure comprises 783 residues: Lon protease (783 aa).

The region spanning 16-210 (LPLLASRGVV…KLLEIIKDEI (195 aa)) is the Lon N-terminal domain. Position 361–368 (361–368 (GAPGVGKT)) interacts with ATP. A Lon proteolytic domain is found at 597–778 (KDRVGVATGM…DQVLDLILGG (182 aa)). Active-site residues include Ser-684 and Lys-727.

It belongs to the peptidase S16 family. In terms of assembly, homohexamer. Organized in a ring with a central cavity.

It is found in the cytoplasm. The catalysed reaction is Hydrolysis of proteins in presence of ATP.. Functionally, ATP-dependent serine protease that mediates the selective degradation of mutant and abnormal proteins as well as certain short-lived regulatory proteins. Required for cellular homeostasis and for survival from DNA damage and developmental changes induced by stress. Degrades polypeptides processively to yield small peptide fragments that are 5 to 10 amino acids long. Binds to DNA in a double-stranded, site-specific manner. In Halothermothrix orenii (strain H 168 / OCM 544 / DSM 9562), this protein is Lon protease.